The following is a 475-amino-acid chain: Ribulose bisphosphate carboxylase large chain (475 aa).

The propeptide occupies 1 to 2 (MS). Residue proline 3 is modified to N-acetylproline. The residue at position 14 (lysine 14) is an N6,N6,N6-trimethyllysine. 2 residues coordinate substrate: asparagine 123 and threonine 173. Lysine 175 serves as the catalytic Proton acceptor. Lysine 177 serves as a coordination point for substrate. The Mg(2+) site is built by lysine 201, aspartate 203, and glutamate 204. Lysine 201 carries the N6-carboxylysine modification. The active-site Proton acceptor is the histidine 294. Substrate is bound by residues arginine 295, histidine 327, and serine 379.

Belongs to the RuBisCO large chain family. Type I subfamily. As to quaternary structure, heterohexadecamer of 8 large chains and 8 small chains; disulfide-linked. The disulfide link is formed within the large subunit homodimers. Mg(2+) is required as a cofactor. In terms of processing, the disulfide bond which can form in the large chain dimeric partners within the hexadecamer appears to be associated with oxidative stress and protein turnover.

It localises to the plastid. The protein localises to the chloroplast. It catalyses the reaction 2 (2R)-3-phosphoglycerate + 2 H(+) = D-ribulose 1,5-bisphosphate + CO2 + H2O. The catalysed reaction is D-ribulose 1,5-bisphosphate + O2 = 2-phosphoglycolate + (2R)-3-phosphoglycerate + 2 H(+). In terms of biological role, ruBisCO catalyzes two reactions: the carboxylation of D-ribulose 1,5-bisphosphate, the primary event in carbon dioxide fixation, as well as the oxidative fragmentation of the pentose substrate in the photorespiration process. Both reactions occur simultaneously and in competition at the same active site. The sequence is that of Ribulose bisphosphate carboxylase large chain from Calycanthus floridus var. glaucus (Eastern sweetshrub).